The primary structure comprises 64 residues: Large ribosomal subunit protein bL33 (64 aa).

This sequence belongs to the bacterial ribosomal protein bL33 family.

The sequence is that of Large ribosomal subunit protein bL33 from Synechococcus sp. (strain WH7803).